Reading from the N-terminus, the 431-residue chain is Pachytene checkpoint protein 2 homolog (431 aa).

At M1 the chain carries N-acetylmethionine. Residue 179–186 (GPPGTGKT) coordinates ATP.

The protein belongs to the AAA ATPase family. PCH2 subfamily. Specifically interacts with the ligand binding domain of the thyroid receptor (TR). This interaction does not require the presence of thyroid hormone for its interaction. Interacts with proteasome subunit PSMA8; to participate in meiosis progression during spermatogenesis.

Its function is as follows. Plays a key role in chromosome recombination and chromosome structure development during meiosis. Required at early steps in meiotic recombination that leads to non-crossovers pathways. Also needed for efficient completion of homologous synapsis by influencing crossover distribution along the chromosomes affecting both crossovers and non-crossovers pathways. Also required for development of higher-order chromosome structures and is needed for synaptonemal-complex formation. In males, required for efficient synapsis of the sex chromosomes and for sex body formation. Promotes early steps of the DNA double-strand breaks (DSBs) repair process upstream of the assembly of RAD51 complexes. Required for depletion of HORMAD1 and HORMAD2 from synapsed chromosomes. Plays a role in mitotic spindle assembly checkpoint (SAC) activation. The chain is Pachytene checkpoint protein 2 homolog (TRIP13) from Sus scrofa (Pig).